A 353-amino-acid chain; its full sequence is Aliphatic aldoxime dehydratase (353 aa).

Ser219 is a binding site for an aliphatic aldoxime. Residue His299 participates in heme b binding. An an aliphatic aldoxime-binding site is contributed by His320. His320 is an active-site residue.

It belongs to the heme-containing dehydratase family. As to quaternary structure, homodimer. Heme b is required as a cofactor.

It carries out the reaction an aliphatic aldoxime = a nitrile + H2O. With respect to regulation, active when the heme iron is in the ferrous state. The activity is enhanced by reducing agents, such as Na(2)S, Na(2)S(2)(O4), 2-mercaptoethanol, and L-cysteine and supplementary additions of electron acceptors such as flavins, sulfite ion, and vitamin K3. The effect of various chemicals on the enzyme activity is different in the presence and absence of the reducing reagent, Na(2)S, which acts not only as a reductant but also changes the substrate specificity of the enzyme. Functionally, catalyzes the dehydration of aldoximes to their corresponding nitrile. Is active toward various arylalkyl- and alkyl-aldoximes, and to a lesser extent toward aryl-aldoximes. This is Aliphatic aldoxime dehydratase from Rhodococcus erythropolis (Arthrobacter picolinophilus).